A 498-amino-acid polypeptide reads, in one-letter code: ATP synthase subunit beta, chloroplastic (498 aa).

Position 172–179 (172–179 (GGAGVGKT)) interacts with ATP.

Belongs to the ATPase alpha/beta chains family. In terms of assembly, F-type ATPases have 2 components, CF(1) - the catalytic core - and CF(0) - the membrane proton channel. CF(1) has five subunits: alpha(3), beta(3), gamma(1), delta(1), epsilon(1). CF(0) has four main subunits: a(1), b(1), b'(1) and c(9-12).

It localises to the plastid. The protein resides in the chloroplast thylakoid membrane. The enzyme catalyses ATP + H2O + 4 H(+)(in) = ADP + phosphate + 5 H(+)(out). Functionally, produces ATP from ADP in the presence of a proton gradient across the membrane. The catalytic sites are hosted primarily by the beta subunits. The sequence is that of ATP synthase subunit beta, chloroplastic from Calycanthus floridus var. glaucus (Eastern sweetshrub).